We begin with the raw amino-acid sequence, 196 residues long: MKATIQRVTSVFGVPRASVFVPRISTPFILHNYISNGRMDLFSKEFHNGRVSKSDLWSSNKEEELLVSQRKKRPISPHLTVYEPEMSWYLSSLHRISGVLLALGFYAFTITLGVTTIMGMDTTFQDLNKWYHEKMPKWSQWVAKGSAAYLFAFHFGNGIRHLIWDMGYELTNRGVIKTGSIVLAGTLVLGTYLLAQ.

A mitochondrion-targeting transit peptide spans 1–53 (MKATIQRVTSVFGVPRASVFVPRISTPFILHNYISNGRMDLFSKEFHNGRVSK). At 54–97 (SDLWSSNKEEELLVSQRKKRPISPHLTVYEPEMSWYLSSLHRIS) the chain is on the mitochondrial matrix side. A ubiquinone-binding residues include S91 and R95. The chain crosses the membrane as a helical span at residues 98 to 118 (GVLLALGFYAFTITLGVTTIM). Topologically, residues 119–137 (GMDTTFQDLNKWYHEKMPK) are mitochondrial intermembrane. The helical transmembrane segment at 138 to 160 (WSQWVAKGSAAYLFAFHFGNGIR) threads the bilayer. Residue H154 participates in heme binding. The Mitochondrial matrix portion of the chain corresponds to 161–174 (HLIWDMGYELTNRG). The helical transmembrane segment at 175 to 195 (VIKTGSIVLAGTLVLGTYLLA) threads the bilayer. Position 196 (Q196) is a topological domain, mitochondrial intermembrane.

It belongs to the cytochrome b560 family.

The protein resides in the mitochondrion inner membrane. Its function is as follows. Homolog of SDH3, but seems not to be a stoichiometric subunit of either the succinate dehydrogenase (SDH) complex or the mitochondrial inner membrane translocase TIM22 complex. This chain is Mitochondrial inner membrane protein SHH3, found in Saccharomyces cerevisiae (strain ATCC 204508 / S288c) (Baker's yeast).